The sequence spans 479 residues: ATP synthase subunit beta (479 aa).

Residue 168–175 coordinates ATP; sequence GGAGVGKT.

The protein belongs to the ATPase alpha/beta chains family. As to quaternary structure, F-type ATPases have 2 components, CF(1) - the catalytic core - and CF(0) - the membrane proton channel. CF(1) has five subunits: alpha(3), beta(3), gamma(1), delta(1), epsilon(1). CF(0) has three main subunits: a(1), b(2) and c(9-12). The alpha and beta chains form an alternating ring which encloses part of the gamma chain. CF(1) is attached to CF(0) by a central stalk formed by the gamma and epsilon chains, while a peripheral stalk is formed by the delta and b chains.

The protein localises to the cell membrane. The enzyme catalyses ATP + H2O + 4 H(+)(in) = ADP + phosphate + 5 H(+)(out). Its function is as follows. Produces ATP from ADP in the presence of a proton gradient across the membrane. The catalytic sites are hosted primarily by the beta subunits. The chain is ATP synthase subunit beta from Parafrankia sp. (strain EAN1pec).